Here is a 46-residue protein sequence, read N- to C-terminus: Protein PsbN (46 aa).

Residues 10-30 (VAIAVLAALLGLTGFGVYTAF) form a helical membrane-spanning segment.

This sequence belongs to the PsbN family.

It localises to the cellular thylakoid membrane. May play a role in photosystem I and II biogenesis. The protein is Protein PsbN of Synechococcus sp. (strain WH7803).